Consider the following 84-residue polypeptide: Small ribosomal subunit protein uS15 (84 aa).

It belongs to the universal ribosomal protein uS15 family. Part of the 30S ribosomal subunit. Forms a bridge to the 50S subunit in the 70S ribosome, contacting the 23S rRNA.

In terms of biological role, one of the primary rRNA binding proteins, it binds directly to 16S rRNA where it helps nucleate assembly of the platform of the 30S subunit by binding and bridging several RNA helices of the 16S rRNA. Forms an intersubunit bridge (bridge B4) with the 23S rRNA of the 50S subunit in the ribosome. This Thermosipho africanus (strain TCF52B) protein is Small ribosomal subunit protein uS15.